The primary structure comprises 257 residues: uncharacterized protein (257 aa).

6 helical membrane passes run Val-23 to Leu-43, Phe-79 to Ala-99, Thr-131 to Val-151, Phe-158 to Met-178, Ala-199 to Met-219, and His-221 to Ile-241.

It belongs to the TerC family.

Its subcellular location is the cell membrane. This is an uncharacterized protein from Bacillus subtilis (strain 168).